The following is a 317-amino-acid chain: 1D-myo-inositol 2-acetamido-2-deoxy-alpha-D-glucopyranoside deacetylase (317 aa).

H15, D18, and H154 together coordinate Zn(2+). A disordered region spans residues 289–317 (QDLDNRNPNSQPPADQAREDHLLTGLGFA).

Belongs to the MshB deacetylase family. The cofactor is Zn(2+).

The catalysed reaction is 1D-myo-inositol 2-acetamido-2-deoxy-alpha-D-glucopyranoside + H2O = 1D-myo-inositol 2-amino-2-deoxy-alpha-D-glucopyranoside + acetate. Functionally, catalyzes the deacetylation of 1D-myo-inositol 2-acetamido-2-deoxy-alpha-D-glucopyranoside (GlcNAc-Ins) in the mycothiol biosynthesis pathway. This is 1D-myo-inositol 2-acetamido-2-deoxy-alpha-D-glucopyranoside deacetylase from Segniliparus rotundus (strain ATCC BAA-972 / CDC 1076 / CIP 108378 / DSM 44985 / JCM 13578).